Consider the following 823-residue polypeptide: Lon protease (823 aa).

The Lon N-terminal domain occupies 51–246 (IPILPLRNMV…RLLFILNREY (196 aa)). 397-404 (GPPGVGKT) serves as a coordination point for ATP. A Lon proteolytic domain is found at 633–815 (NDYAGVVTGL…QQVVDLALLR (183 aa)). Catalysis depends on residues serine 721 and lysine 764.

Belongs to the peptidase S16 family. As to quaternary structure, homohexamer. Organized in a ring with a central cavity.

The protein resides in the cytoplasm. The enzyme catalyses Hydrolysis of proteins in presence of ATP.. ATP-dependent serine protease that mediates the selective degradation of mutant and abnormal proteins as well as certain short-lived regulatory proteins. Required for cellular homeostasis and for survival from DNA damage and developmental changes induced by stress. Degrades polypeptides processively to yield small peptide fragments that are 5 to 10 amino acids long. Binds to DNA in a double-stranded, site-specific manner. This chain is Lon protease, found in Parabacteroides distasonis (strain ATCC 8503 / DSM 20701 / CIP 104284 / JCM 5825 / NCTC 11152).